The following is a 291-amino-acid chain: HTH-type transcriptional regulator CitR (291 aa).

An HTH lysR-type domain is found at 1 to 58 (MDFKWLHTFVTAAKYENFRKTAETLFLSQPTVTVHIKQLEKEISCKLFERKGRQIQLT). Residues 18 to 37 (FRKTAETLFLSQPTVTVHIK) constitute a DNA-binding region (H-T-H motif).

This sequence belongs to the LysR transcriptional regulatory family.

It localises to the cytoplasm. In terms of biological role, negative regulatory protein for the citA gene for citrate synthase I. The sequence is that of HTH-type transcriptional regulator CitR (citR) from Bacillus subtilis (strain 168).